A 128-amino-acid polypeptide reads, in one-letter code: Azurin (128 aa).

Residues 1-128 (AECSVDIQGN…AMMKGTLTLK (128 aa)) enclose the Plastocyanin-like domain. Cu cation contacts are provided by H46, C112, H117, and M121.

The protein resides in the periplasm. Its function is as follows. Transfers electrons from cytochrome c551 to cytochrome oxidase. This is Azurin from Pseudomonas denitrificans.